The primary structure comprises 99 residues: Protein NCBP2AS2 (99 aa).

Residues 76 to 99 (ELRRGLRGRSGPPPGSQRGPGANI) form a disordered region.

This is Protein NCBP2AS2 from Homo sapiens (Human).